A 501-amino-acid polypeptide reads, in one-letter code: MARCSNSMALLFSFGLLWLCSGVLGTDTEERLVEHLLDPSRYNKLIRPATNGSELVTVQLMVSLAQLISVHEREQIMTTNVWLTQEWEDYRLTWKPEDFDNMKKVRLPSKHIWLPDVVLYNNADGMYEVSFYSNAVVSYDGSIFWLPPAIYKSACKIEVKHFPFDQQNCTMKFRSWTYDRTEIDLVLKSDVASLDDFTPSGEWDIIALPGRRNENPDDSTYVDITYDFIIRRKPLFYTINLIIPCVLITSLAILVFYLPSDCGEKMTLCISVLLALTVFLLLISKIVPPTSLDVPLVGKYLMFTMVLVTFSIVTSVCVLNVHHRSPTTHTMAPWVKVVFLEKLPTLLFLQQPRHRCARQRLRLRRRQREREGAGTLFFREGPAADPCTCFVNPASMQGLAGAFQAEPAAAGLGRSMGPCSCGLREAVDGVRFIADHMRSEDDDQSVREDWKYVAMVIDRLFLWIFVFVCVFGTIGMFLQPLFQNYTATTFLHSDHSAPSSK.

The first 25 residues, 1-25 (MARCSNSMALLFSFGLLWLCSGVLG), serve as a signal peptide directing secretion. The Extracellular portion of the chain corresponds to 26–238 (TDTEERLVEH…IIRRKPLFYT (213 aa)). N-linked (GlcNAc...) asparagine glycosylation is found at N51 and N168. Cysteines 155 and 169 form a disulfide. Residues 239 to 259 (INLIIPCVLITSLAILVFYLP) traverse the membrane as a helical segment. Topologically, residues 260-267 (SDCGEKMT) are cytoplasmic. The helical transmembrane segment at 268-288 (LCISVLLALTVFLLLISKIVP) threads the bilayer. The Extracellular segment spans residues 289–300 (PTSLDVPLVGKY). The helical transmembrane segment at 301-321 (LMFTMVLVTFSIVTSVCVLNV) threads the bilayer. The Cytoplasmic segment spans residues 322–459 (HHRSPTTHTM…WKYVAMVIDR (138 aa)). Residues 460–480 (LFLWIFVFVCVFGTIGMFLQP) form a helical membrane-spanning segment.

Belongs to the ligand-gated ion channel (TC 1.A.9) family. Acetylcholine receptor (TC 1.A.9.1) subfamily. Beta-2/CHRNB2 sub-subfamily. In terms of assembly, neuronal AChR is a heteropentamer composed of two different types of subunits: alpha and beta. CHRNB2/Beta-2 subunit can be combined to CHRNA2/alpha-2, CHRNA3/alpha-3 or CHRNA4/alpha-4, CHRNA5/alpha-5, CHRNA6/alpha-6 and CHRNB3/beta-3 to give rise to functional receptors. CHRNA2:CHRNB2 and CHRNA4:CHRNB2 nAChR complexes exist in two subtypes: LS (low agonist sensitivity) with a (CHRNA2/4)3:(CHRNB2)2 and HS (high agonist sensitivity) with a (CHRNA2/4)2:(CHRNB2)3 stoichiometry; the subtypes differ in their subunit binding interfaces which are involved in ligand binding. Cells produce predominantly an (CHRNA4)3:(CHRNB2)2 nAChR. The stoichiometric form (CHRNA4)2:(CHRNB2)3 expression is selectively up-regulated by nicotine and has lower single channel conductance and calcium permeability. Also part of the stoichiometric forms: (CHRNA4:CHRNB2)2:CHRNB3 or (CHRNA6:CHRNB2)2:CHRNB3. Can form heteropentamers with CHRNA7, mainly found in basal forebrain cholinergic neurons. Interacts with RIC3; which is required for proper folding and assembly. Interacts with LYPD6.

Its subcellular location is the synaptic cell membrane. It is found in the cell membrane. The enzyme catalyses K(+)(in) = K(+)(out). It carries out the reaction Na(+)(in) = Na(+)(out). It catalyses the reaction Ca(2+)(in) = Ca(2+)(out). Its activity is regulated as follows. Activated by a myriad of ligands such as acetylcholine, cytisine, nicotine, choline and epibatidine. Channel potentiation by calcium is stoichiometry-selective, CHRNA4:CHRNB2 nACh receptor is achieved by calcium association with topographically distinct sites framed by anionic residues within the CHRNA4 subunit and between the CHRNA4 and CHRNB2 subunits. Oligomeric amyloid-beta protein 42 activates specifially CHRNA7:CHRNB2 nAchRs. nAChR activity is inhibited by the antagonist alpha-conotoxins BuIA, PnIA, PnIC, GID and MII, small disulfide-constrained peptides from cone snails. Functionally, component of neuronal acetylcholine receptors (nAChRs) that function as pentameric, ligand-gated cation channels with high calcium permeability among other activities. nAChRs are excitatory neurotrasnmitter receptors formed by a collection of nAChR subunits known to mediate synaptic transmission in the nervous system and the neuromuscular junction. Each nAchR subunit confers differential attributes to channel properties, including activation, deactivation and desensitization kinetics, pH sensitivity, cation permeability, and binding to allosteric modulators. CHRNB2 forms heteropentameric neuronal acetylcholine receptors with CHRNA2, CHRNA3, CHRNA4 and CHRNA6, as well as CHRNA5 and CHRNB3 as accesory subunits. Found in two major stoichiometric forms,(CHRNA4)3:(CHRNB2)2 and (CHRNA4)2:(CHRNB2)3, the two stoichiometric forms differ in their unitary conductance, calcium permeability, ACh sensitivity and potentiation by divalent cation. Heteropentameric channels with CHRNA6 and CHRNA4 exhibit high sensitivity to ACh and nicotine and are predominantly expressed in only a few brain areas, including dopaminergic neurons, norepirephrine neurons and cells of the visual system. nAChrs containing CHRNA6 subunits mediate endogenous cholinergic modulation of dopamine and gamma-aminobutyric acid (GABA) release in response to nicotine at nerve terminals. Also forms functional nAChRs with other subunits such as CHRNA7:CHRNB2, mainly expressed in basal forebrain cholinergic neurons. This chain is Neuronal acetylcholine receptor subunit beta-2 (Chrnb2), found in Mus musculus (Mouse).